The sequence spans 132 residues: Protein LEKR1 (132 aa).

Residues 37-116 adopt a coiled-coil conformation; it reads FKAMEEKVKA…KKQLSHLQDE (80 aa).

The chain is Protein LEKR1 (LEKR1) from Homo sapiens (Human).